Consider the following 235-residue polypeptide: Eukaryotic translation initiation factor 4E-1 (235 aa).

Positions methionine 1–lysine 16 are enriched in basic and acidic residues. The interval methionine 1–serine 59 is disordered. EIF4G-binding stretches follow at residues histidine 60–glutamate 63 and phenylalanine 70–lysine 106. Residues lysine 78–glycine 83, lysine 110, and tryptophan 128–glutamate 129 contribute to the mRNA site. Residues cysteine 133 and cysteine 171 are joined by a disulfide bond. Residues tyrosine 154–glutamine 163 are EIF4G-binding. Residues arginine 178–arginine 183 and lysine 223–arginine 227 contribute to the mRNA site.

The protein belongs to the eukaryotic initiation factor 4E family. In terms of assembly, EIF4F is a multi-subunit complex, the composition of which varies with external and internal environmental conditions. It is composed of at least EIF4A, EIF4E and EIF4G. EIF4E is also known to interact with other partners. In higher plants two isoforms of EIF4F have been identified, named isoform EIF4F and isoform EIF(iso)4F. Isoform EIF4F has subunits p220 and p26, whereas isoform EIF(iso)4F has subunits p82 and p28. Interacts directly with EXA1. (Microbial infection) Interacts with viral genome-linked protein (VPg); this interaction is possible in susceptible hosts but impaired in resistant plants. According to the redox status, the Cys-133-Cys-171 disulfide bridge may have a role in regulating protein function by affecting its ability to bind capped mRNA. In terms of tissue distribution, expressed in all tissues except in the cells of the specialization zone of the roots.

Its subcellular location is the nucleus. It is found in the cytoplasm. Component of the protein complex eIF4F, which is involved in the recognition of the mRNA cap, ATP-dependent unwinding of 5'-terminal secondary structure and recruitment of mRNA to the ribosome. Recognizes and binds the 7-methylguanosine-containing mRNA cap during an early step in the initiation of protein synthesis and facilitates ribosome binding by inducing the unwinding of the mRNAs secondary structures. Key component of recessive resistance to potyviruses. Its function is as follows. (Microbial infection) Susceptibility host factor required for viral infection by recruiting viral RNAs to the host ribosomal complex via an interaction with viral genome-linked protein (VPg). This Arabidopsis thaliana (Mouse-ear cress) protein is Eukaryotic translation initiation factor 4E-1.